A 1572-amino-acid polypeptide reads, in one-letter code: Multiple epidermal growth factor-like domains protein 6 (1572 aa).

An N-terminal signal peptide occupies residues 1-26 (MPVGVEARASWRVVALTLLLLPAVPA). The EMI domain occupies 40–121 (MPHVCAEQKL…QKPGQEGCLS (82 aa)). Disulfide bonds link Cys-44/Cys-107, Cys-73/Cys-79, Cys-106/Cys-119, Cys-126/Cys-137, Cys-133/Cys-146, Cys-148/Cys-161, Cys-167/Cys-178, Cys-174/Cys-187, Cys-189/Cys-202, Cys-291/Cys-302, Cys-298/Cys-311, Cys-313/Cys-326, Cys-418/Cys-429, Cys-425/Cys-438, Cys-440/Cys-453, Cys-522/Cys-535, Cys-529/Cys-542, Cys-544/Cys-553, Cys-566/Cys-578, Cys-572/Cys-585, Cys-587/Cys-596, Cys-609/Cys-621, Cys-615/Cys-628, Cys-630/Cys-639, Cys-788/Cys-797, Cys-791/Cys-804, Cys-806/Cys-815, Cys-832/Cys-840, Cys-834/Cys-847, Cys-849/Cys-858, Cys-871/Cys-884, Cys-875/Cys-891, Cys-893/Cys-902, Cys-915/Cys-927, Cys-921/Cys-934, and Cys-936/Cys-945. The EGF-like 1; calcium-binding domain occupies 122-162 (DVDECANANGGCEGPCCNTVGGFYCRCPPGYQLQGDGKTCQ). The EGF-like 2; calcium-binding domain maps to 163–203 (DVDECRSHNGGCQHRCVNTPGSYLCECKPGFRLHTDGRTCL). The region spanning 287–327 (DVDECALGLAQCAHGCLNTQGSFKCVCHAGYELGADGRQCY) is the EGF-like 3; calcium-binding domain. Residues 414 to 454 (DVDECASGHSGCEHHCSNLAGSFQCFCEAGYRLDEDRRGCT) enclose the EGF-like 4; calcium-binding domain. 17 consecutive EGF-like domains span residues 518–554 (FGHD…IICN), 562–597 (FGKN…AHCE), 605–640 (YGKH…RFCH), 785–816 (QEIC…SRCQ), 829–859 (QMRC…LSCQ), 867–903 (WGPD…PQCE), 911–946 (FGPG…SFCE), 997–1032 (FGLN…PTCL), 1040–1075 (YGKN…LACE), 1083–1118 (HGAG…DKCQ), 1131–1161 (EEHC…SHCE), 1169–1204 (FGEA…PGCE), 1256–1291 (YGPG…ADCS), 1299–1334 (FGPS…GHCE), 1342–1377 (FGKG…PHCE), 1390–1420 (LLEC…QACE), and 1428–1463 (HGSG…QFCE). N-linked (GlcNAc...) asparagine glycosylation occurs at Asn-1000. Intrachain disulfides connect Cys-1001-Cys-1013, Cys-1007-Cys-1020, Cys-1022-Cys-1031, Cys-1044-Cys-1056, Cys-1050-Cys-1063, Cys-1065-Cys-1074, Cys-1087-Cys-1099, Cys-1093-Cys-1106, Cys-1108-Cys-1117, Cys-1134-Cys-1142, Cys-1136-Cys-1149, Cys-1151-Cys-1160, Cys-1173-Cys-1185, Cys-1177-Cys-1192, Cys-1194-Cys-1203, Cys-1260-Cys-1272, Cys-1266-Cys-1279, Cys-1281-Cys-1290, Cys-1303-Cys-1315, Cys-1309-Cys-1322, Cys-1324-Cys-1333, Cys-1346-Cys-1358, Cys-1352-Cys-1365, Cys-1367-Cys-1376, Cys-1393-Cys-1401, Cys-1395-Cys-1408, Cys-1410-Cys-1419, Cys-1432-Cys-1444, Cys-1438-Cys-1451, and Cys-1453-Cys-1462.

It is found in the secreted. The sequence is that of Multiple epidermal growth factor-like domains protein 6 (Megf6) from Mus musculus (Mouse).